The chain runs to 438 residues: Probable chaperone protein ClpB 1 (438 aa).

Residues 1-94 are a coiled coil; sequence MNTADTRQRL…NNRKIEARQA (94 aa). Residues 1–118 form a linker region; that stretch reads MNTADTRQRL…IADIVSRWTG (118 aa). Residues 128-345 are NBD2; it reads ERQKLLGIES…RIDEVILFTP (218 aa). An ATP-binding site is contributed by 178–185; that stretch reads GPTGVGKT. The C-terminal stretch occupies residues 346-438; sequence LTRENLREIV…ENDAIVMKKK (93 aa).

Belongs to the ClpA/ClpB family. In terms of assembly, homohexamer. The oligomerization is ATP-dependent.

The protein resides in the cytoplasm. Functionally, part of a stress-induced multi-chaperone system, it is involved in the recovery of the cell from heat-induced damage, in cooperation with DnaK, DnaJ and GrpE. Acts before DnaK, in the processing of protein aggregates. Protein binding stimulates the ATPase activity; ATP hydrolysis unfolds the denatured protein aggregates, which probably helps expose new hydrophobic binding sites on the surface of ClpB-bound aggregates, contributing to the solubilization and refolding of denatured protein aggregates by DnaK. This Chlorobaculum tepidum (strain ATCC 49652 / DSM 12025 / NBRC 103806 / TLS) (Chlorobium tepidum) protein is Probable chaperone protein ClpB 1 (clpB1).